A 304-amino-acid chain; its full sequence is Ribosomal protein L11 methyltransferase (304 aa).

S-adenosyl-L-methionine is bound by residues Thr147, Gly168, Asp190, and Asn238.

The protein belongs to the methyltransferase superfamily. PrmA family.

Its subcellular location is the cytoplasm. The enzyme catalyses L-lysyl-[protein] + 3 S-adenosyl-L-methionine = N(6),N(6),N(6)-trimethyl-L-lysyl-[protein] + 3 S-adenosyl-L-homocysteine + 3 H(+). Its function is as follows. Methylates ribosomal protein L11. This chain is Ribosomal protein L11 methyltransferase, found in Prochlorococcus marinus (strain SARG / CCMP1375 / SS120).